A 595-amino-acid chain; its full sequence is Tectonic-3 (595 aa).

The N-terminal stretch at 1-22 is a signal peptide; it reads MCTLQLHLLLLVVLMLSETARP. Positions 23-62 are disordered; sequence QPSSTARAFPTSWGLEPVTPEVPTSAPPDSSESPTPWTLS. At 23–575 the chain is on the extracellular side; it reads QPSSTARAFP…ALSRGASVQK (553 aa). Residues 49-62 show a composition bias toward polar residues; the sequence is PPDSSESPTPWTLS. Asparagine 167 and asparagine 336 each carry an N-linked (GlcNAc...) asparagine glycan. The chain crosses the membrane as a helical span at residues 576–594; that stretch reads DSLVLILCVLLLGLLNSQT. Position 595 (lysine 595) is a topological domain, cytoplasmic.

Belongs to the tectonic family. Part of the tectonic-like complex (also named B9 complex).

Its subcellular location is the membrane. Part of the tectonic-like complex which is required for tissue-specific ciliogenesis and may regulate ciliary membrane composition. May be involved in apoptosis regulation. Necessary for signal transduction through the sonic hedgehog (Shh) signaling pathway. The protein is Tectonic-3 (Tctn3) of Mus musculus (Mouse).